The sequence spans 67 residues: Probable Sec-independent protein translocase protein TatE (67 aa).

A helical membrane pass occupies residues 4-21 (ISITKLLVVAALVVLLFG).

Belongs to the TatA/E family. TatE subfamily.

The protein resides in the cell inner membrane. Part of the twin-arginine translocation (Tat) system that transports large folded proteins containing a characteristic twin-arginine motif in their signal peptide across membranes. TatE shares overlapping functions with TatA. This chain is Probable Sec-independent protein translocase protein TatE, found in Salmonella arizonae (strain ATCC BAA-731 / CDC346-86 / RSK2980).